Consider the following 447-residue polypeptide: UPF0328 protein ECU10_1870 (447 aa).

2 stretches are compositionally biased toward basic and acidic residues: residues 1-10 and 64-84; these read MPSDHPDFRS and HTEGCHTHEANPEPNTKHTET. Disordered regions lie at residues 1–103 and 147–173; these read MPSD…TATP and VKSQSVSHRAPITYQPPRPTTTSNPRI. Residues 92 to 103 show a composition bias toward pro residues; it reads CPPPHPGPTATP.

This sequence belongs to the UPF0328 family.

The chain is UPF0328 protein ECU10_1870 from Encephalitozoon cuniculi (strain GB-M1) (Microsporidian parasite).